We begin with the raw amino-acid sequence, 248 residues long: tRNA uridine(34) hydroxylase (248 aa).

In terms of domain architecture, Rhodanese spans Arg127 to Tyr221. Cys181 functions as the Cysteine persulfide intermediate in the catalytic mechanism.

Belongs to the TrhO family.

It carries out the reaction uridine(34) in tRNA + AH2 + O2 = 5-hydroxyuridine(34) in tRNA + A + H2O. Its function is as follows. Catalyzes oxygen-dependent 5-hydroxyuridine (ho5U) modification at position 34 in tRNAs. The protein is tRNA uridine(34) hydroxylase of Xanthomonas euvesicatoria pv. vesicatoria (strain 85-10) (Xanthomonas campestris pv. vesicatoria).